Here is a 147-residue protein sequence, read N- to C-terminus: Basic phospholipase A2 beta-bungarotoxin A4 chain (147 aa).

Residues 1-19 (MNPAHLLVLSAVCVSLLGA) form the signal peptide. Residues 20-27 (ANIPPHPL) constitute a propeptide that is removed on maturation. Intrachain disulfides connect Cys-54/Cys-146, Cys-56/Cys-72, Cys-71/Cys-127, Cys-78/Cys-120, Cys-88/Cys-113, and Cys-106/Cys-118. Tyr-55, Gly-57, and Gly-59 together coordinate Ca(2+). The active site involves His-75. Asp-76 lines the Ca(2+) pocket. Asp-121 is an active-site residue.

The protein belongs to the phospholipase A2 family. Group I subfamily. D49 sub-subfamily. In terms of assembly, heterodimer; disulfide-linked. The A chain has phospholipase A2 activity and the B chain shows homology with the basic protease inhibitors. Ca(2+) serves as cofactor. In terms of tissue distribution, expressed by the venom gland.

The protein resides in the secreted. The enzyme catalyses a 1,2-diacyl-sn-glycero-3-phosphocholine + H2O = a 1-acyl-sn-glycero-3-phosphocholine + a fatty acid + H(+). Functionally, snake venom phospholipase A2 (PLA2) that shows presynaptic neurotoxicity. The A chain has phospholipase activity. PLA2 catalyzes the calcium-dependent hydrolysis of the 2-acyl groups in 3-sn-phosphoglycerides. This chain is Basic phospholipase A2 beta-bungarotoxin A4 chain, found in Bungarus candidus (Malayan krait).